We begin with the raw amino-acid sequence, 470 residues long: L-fuculokinase (470 aa).

It belongs to the FGGY kinase family. It depends on a divalent metal cation as a cofactor.

The catalysed reaction is L-fuculose + ATP = L-fuculose 1-phosphate + ADP + H(+). The protein operates within carbohydrate degradation; L-fucose degradation; L-lactaldehyde and glycerone phosphate from L-fucose: step 2/3. Functionally, catalyzes the phosphorylation of L-fuculose. This chain is L-fuculokinase, found in Haemophilus influenzae (strain ATCC 51907 / DSM 11121 / KW20 / Rd).